Reading from the N-terminus, the 317-residue chain is Transcription factor elt-3 (317 aa).

Residues 1–34 (METANYYLPSPPYSSTSSSDSRESRMNTPIPTTY) are disordered. Residues 244–268 (CSNCKTRETTLWRRNGEGGVECNAC) form a GATA-type zinc finger. The interval 290-317 (KRNRRPRNESPNSAIRNTHQRHGHAAAC) is disordered. Residues 307 to 317 (THQRHGHAAAC) are compositionally biased toward basic residues.

In terms of assembly, interacts with skn-1; interaction may enhance transcriptional activation of target genes. As to expression, expressed in head, trunk and tail. Expression decreases with age in the hypodermal cells and the pharyngeal-intestinal valve cells in the head, eventually showing little or no expression in about 14 day old worms. Expressed in hypodermal, but not in intestinal, cells at 1 day of age. Expression in the hypodermal and intestinal cells in the trunk region decreases quickly between day 3 and day 5 of adulthood. Expression in the tail between days 3 and 14 stays approximately uniform.

Its subcellular location is the nucleus. Transcription factor. Required, in concert with signal transducer and transcription factor sta-2, for up-regulation of the vacuolar H(+)-ATPase and acceleration of lysosome maturation at molt. Involved in regulating hypodermal development, perhaps acting downstream of transcription factor elt-1. Modulates environmentally induced changes in collagen gene expression, including rol-6, sqt-1, lon-3, and dpy-13. Involved in regulating expression of various genes, including gst-4, sod-3, ugt-9, and col-144. In response to oxidative stress, required to up-regulate expression of gst-4 mRNA. Regulated by the Insulin/IGF-1-like signaling (IIS) mediated pathway. Plays a role in longevity. May regulate the expression of genes that control sensitivity to osmotic stress, in conjunction with the GATA region-binding transcription factor elt-2. May form a transcriptional circuit with GATA factors egl-18 and elt-6. The polypeptide is Transcription factor elt-3 (Caenorhabditis elegans).